The following is a 561-amino-acid chain: Asparagine synthetase [glutamine-hydrolyzing] (561 aa).

The For GATase activity role is filled by Cys-2. Positions 2–191 constitute a Glutamine amidotransferase type-2 domain; that stretch reads CGIWALFGSD…PGHYEVLDLK (190 aa). Residues 49–53, 75–77, and Asp-97 contribute to the L-glutamine site; these read RLAVV and NGE. An Asparagine synthetase domain is found at 213 to 536; it reads HAIYDSVEKL…PGRADWLTHY (324 aa). ATP is bound by residues Leu-256, Ile-288, and 363–364; that span reads SG. Lys-385 carries the N6-acetyllysine modification. Thr-545 carries the phosphothreonine modification. Ser-557 carries the phosphoserine modification.

The catalysed reaction is L-aspartate + L-glutamine + ATP + H2O = L-asparagine + L-glutamate + AMP + diphosphate + H(+). It functions in the pathway amino-acid biosynthesis; L-asparagine biosynthesis; L-asparagine from L-aspartate (L-Gln route): step 1/1. This is Asparagine synthetase [glutamine-hydrolyzing] (Asns) from Rattus norvegicus (Rat).